A 188-amino-acid chain; its full sequence is Putative manganese efflux pump MntP (188 aa).

Transmembrane regions (helical) follow at residues 3-23 (ISATILLAFGMSMDAFAASIG), 41-61 (LIFGAIETLTPLIGWSLGMLA), 62-82 (SQFILEWNHWIAFTLLVFLGG), 106-128 (WILVTTAIATSLDAMAVGVGLAF), 143-163 (ATLIMSTIGMMVGRFIGPLLG), and 168-188 (ILGGIVLIGIGGQILWSHFAG).

This sequence belongs to the MntP (TC 9.B.29) family.

The protein localises to the cell inner membrane. Probably functions as a manganese efflux pump. The polypeptide is Putative manganese efflux pump MntP (Enterobacter sp. (strain 638)).